The sequence spans 187 residues: CASP-like protein 2C1 (187 aa).

The Cytoplasmic segment spans residues M1 to E14. A helical transmembrane segment spans residues G15–S35. At T36–Q54 the chain is on the extracellular side. Residues A55–L75 traverse the membrane as a helical segment. At K76–K97 the chain is on the cytoplasmic side. The chain crosses the membrane as a helical span at residues A98–L118. Residues D119–Q139 lie on the Extracellular side of the membrane. The helical transmembrane segment at V140–A160 threads the bilayer. Residues S161 to H187 are Cytoplasmic-facing.

It belongs to the Casparian strip membrane proteins (CASP) family. Homodimer and heterodimers.

It localises to the cell membrane. The chain is CASP-like protein 2C1 from Zea mays (Maize).